Here is a 339-residue protein sequence, read N- to C-terminus: Chromo domain-containing protein cec-3 (339 aa).

The segment at 1–21 is disordered; that stretch reads MSNEGSREESREPEAREGKSD. The Chromo domain occupies 24-84; that stretch reads FEVEKILAHK…KLKVTDKTEL (61 aa). A compositionally biased stretch (basic residues) spans 91-105; the sequence is QIKKNKSQKSKKRSK. 2 disordered regions span residues 91–199 and 215–272; these read QIKK…APLS and EEKA…QRTL. Composition is skewed to basic and acidic residues over residues 106-117 and 171-183; these read TVSDHESNHDSD and AAMEVRDTRRNWL. Positions 184–193 are enriched in acidic residues; sequence DEESSDDEAE. Residues 230-241 show a composition bias toward basic and acidic residues; the sequence is KPREVVIKKDPS. Residues 242–251 show a composition bias toward low complexity; sequence ESPVASASSV.

Expressed in every cell of the embryo (at protein level). In adults, expressed predominantly in the head region and the germline.

It is found in the chromosome. The protein localises to the nucleus. Its function is as follows. Specifically recognizes and binds methylated 'Lys-9' of histone H3 (H3K9me), with highest preference for trimethylated 'Lys-9' (H3K9me3) followed by dimethylated 'Lys-9' (H3K9me2) followed by monomethylated 'Lys-9' (H3K9me1). Plays a role in maintaining correct unc-4 expression in the VC motor neurons where unc-4 is expressed in the vulval but not in the non-vulval VC neurons. This is Chromo domain-containing protein cec-3 (cec-3) from Caenorhabditis elegans.